Consider the following 237-residue polypeptide: MKTAYLASLVLIVSTAYVIRLIAILPFFHTQAGTEKDTKDGVNLLKIRKSSKKPLKIFVFLGSGGHTGEMIRLLENYQDLLLGKSIVYLGYSDEASRQRFAHFIKKFGHCKVKYYEFMKAREVKATLLQSVKTIIGTLVQSFVHVVRIRFAMCGSPHLFLLNGPGTCCIISFWLKIMELLLPLLGSSHIVYVESLARINTPSLTGKILYWVVDEFIVQWQELRDNYLPRSKWFGILV.

Over 1–7 (MKTAYLA) the chain is Lumenal. Residues 8–28 (SLVLIVSTAYVIRLIAILPFF) traverse the membrane as a helical segment. Topologically, residues 29–237 (HTQAGTEKDT…PRSKWFGILV (209 aa)) are cytoplasmic.

The protein belongs to the ALG14 family. In terms of assembly, heterodimer with ALG13 to form a functional enzyme.

Its subcellular location is the endoplasmic reticulum membrane. It is found in the nucleus membrane. Functionally, involved in protein N-glycosylation. Essential for the second step of the dolichol-linked oligosaccharide pathway. Anchors the catalytic subunit ALG13 to the ER. The polypeptide is UDP-N-acetylglucosamine transferase subunit ALG14 (ALG14) (Saccharomyces cerevisiae (strain ATCC 204508 / S288c) (Baker's yeast)).